We begin with the raw amino-acid sequence, 886 residues long: DNA mismatch repair protein MutS (886 aa).

626 to 633 provides a ligand contact to ATP; it reads GPNMGGKS.

This sequence belongs to the DNA mismatch repair MutS family.

Functionally, this protein is involved in the repair of mismatches in DNA. It is possible that it carries out the mismatch recognition step. This protein has a weak ATPase activity. The protein is DNA mismatch repair protein MutS of Burkholderia ambifaria (strain ATCC BAA-244 / DSM 16087 / CCUG 44356 / LMG 19182 / AMMD) (Burkholderia cepacia (strain AMMD)).